Consider the following 445-residue polypeptide: MDIRQVTETIAMIEEQNFDIRTITMGISLLDCIDPDINRAAEKIYQKITTKAANLVAVGDEIAAELGIPIVNKRVSVTPISLIGAATDATDYVVLAKALDKAAKEIGVDFIGGFSALVQKGYQKGDEILINSIPRALTETDKVCSSVNIGSTKSGINMTAVADMGRIIKETANLSDMGAAKLVVFANAVEDNPFMAGAFHGVGEADVIINVGVSGPGVVKRALEKVRGQSFDVVAETVKKTAFKITRIGQLVGQMASERLGVEFGIVDLSLAPTPAVGDSVARVLEEMGLETVGTHGTTAALALLNDQVKKGGVMACNQVGGLSGAFIPVSEDEGMIAAVQNGSLNLEKLEAMTAICSVGLDMIAIPEDTPAETIAAMIADEAAIGVINMKTTAVRIIPKGREGDMIEFGGLLGTAPVMKVNGASSVDFISRGGQIPAPIHSFKN.

Belongs to the UPF0210 family. As to quaternary structure, homodimer.

This chain is UPF0210 protein SPJ_0248, found in Streptococcus pneumoniae (strain JJA).